We begin with the raw amino-acid sequence, 20 residues long: Major extrapallial fluid protein (20 aa).

A disordered region spans residues 1–20; sequence NPVDDHHDDHHDAPIVEHHD.

Homodimer. In terms of processing, glycosylated.

In terms of biological role, appears to be a building block of the soluble organic matrix of the shell. The protein binds calcium. The polypeptide is Major extrapallial fluid protein (Mytilus edulis (Blue mussel)).